The primary structure comprises 335 residues: Biotin synthase (335 aa).

Positions tyrosine 46–arginine 274 constitute a Radical SAM core domain. [4Fe-4S] cluster-binding residues include cysteine 61, cysteine 65, and cysteine 68. Residues cysteine 105, cysteine 137, cysteine 197, and arginine 269 each coordinate [2Fe-2S] cluster.

This sequence belongs to the radical SAM superfamily. Biotin synthase family. As to quaternary structure, homodimer. [4Fe-4S] cluster serves as cofactor. It depends on [2Fe-2S] cluster as a cofactor.

The catalysed reaction is (4R,5S)-dethiobiotin + (sulfur carrier)-SH + 2 reduced [2Fe-2S]-[ferredoxin] + 2 S-adenosyl-L-methionine = (sulfur carrier)-H + biotin + 2 5'-deoxyadenosine + 2 L-methionine + 2 oxidized [2Fe-2S]-[ferredoxin]. The protein operates within cofactor biosynthesis; biotin biosynthesis; biotin from 7,8-diaminononanoate: step 2/2. Catalyzes the conversion of dethiobiotin (DTB) to biotin by the insertion of a sulfur atom into dethiobiotin via a radical-based mechanism. The polypeptide is Biotin synthase (Prochlorococcus marinus (strain MIT 9515)).